The following is a 121-amino-acid chain: Ribosome-binding factor A (121 aa).

This sequence belongs to the RbfA family. As to quaternary structure, monomer. Binds 30S ribosomal subunits, but not 50S ribosomal subunits or 70S ribosomes.

Its subcellular location is the cytoplasm. One of several proteins that assist in the late maturation steps of the functional core of the 30S ribosomal subunit. Associates with free 30S ribosomal subunits (but not with 30S subunits that are part of 70S ribosomes or polysomes). Required for efficient processing of 16S rRNA. May interact with the 5'-terminal helix region of 16S rRNA. The sequence is that of Ribosome-binding factor A from Paraburkholderia xenovorans (strain LB400).